A 382-amino-acid chain; its full sequence is MSNNDETVLGHLADHVFKHSGPIPESFVEVKGIDYSKPDAIDMRASDLIKSMKTMGFQASSLGQACDIIDEMRAWRGKHIDELDEYSRKGSFDENGFQKSTIFLGYTSNLISSGLRETLRYLVQHNMVSAIVTTAGGVEEDIIKCLAPTYLGEFTLKGAALRDKGMNRIGNLLVPNNNYCKFEEWIVPILDAMLAEQEAYVAQQGKDCLGVNTDVDSPIWTPSKLCDRLGKEINDESSVLYWAHKNKIPVFCPAITDGSIGDMLFLHTFRASPQQLRLDLVADIRKINSMSMEASQAGMIILGGGLIKHHIANACLMRNGADYAVYINTGQEFDGSDAGARPDEAVSWGKIKVEAKSVKVYADVTTVFPLIVAATFANGKKN.

Residues 108–112, 134–136, Glu140, and Asp257 each bind NAD(+); these read SNLIS and TAG. Residue 139 to 140 participates in spermidine binding; that stretch reads EE. A spermidine-binding site is contributed by Asp262. Gly304 contributes to the NAD(+) binding site. Spermidine is bound at residue His309. An NAD(+)-binding site is contributed by 329–330; that stretch reads TG. Residues 335 to 337 and 344 to 350 contribute to the spermidine site; these read GSD and EAVSWGK. Lys350 functions as the Nucleophile in the catalytic mechanism. An NAD(+)-binding site is contributed by 363 to 364; sequence DV.

Belongs to the deoxyhypusine synthase family. NAD(+) is required as a cofactor.

The catalysed reaction is [eIF5A protein]-L-lysine + spermidine = [eIF5A protein]-deoxyhypusine + propane-1,3-diamine. It functions in the pathway protein modification; eIF5A hypusination. In terms of biological role, catalyzes the NAD-dependent oxidative cleavage of spermidine and the subsequent transfer of the butylamine moiety of spermidine to the epsilon-amino group of a specific lysine residue of the eIF-5A precursor protein to form the intermediate deoxyhypusine residue. This is Deoxyhypusine synthase (DYS1) from Eremothecium gossypii (strain ATCC 10895 / CBS 109.51 / FGSC 9923 / NRRL Y-1056) (Yeast).